The primary structure comprises 798 residues: Tripartite terminase subunit 1 (798 aa).

The C3H1-type zinc-finger motif lies at 191 to 219 (CFQCYEELMAVPNQGRSINRRMQGLLCDH). Over residues 416–429 (AAGAARSRAEAASG) the composition is skewed to low complexity. The interval 416 to 458 (AAGAARSRAEAASGAGAGGEEGAGAAAGRGNTGGDEGAGTTTA) is disordered. Positions 430–452 (AGAGGEEGAGAAAGRGNTGGDEG) are enriched in gly residues. 674–681 (YNETFGKQ) is an ATP binding site.

It belongs to the herpesviridae TRM1 protein family. In terms of assembly, associates with TRM2 and TRM3 to form the tripartite terminase complex. Interacts with portal protein.

It is found in the host nucleus. In terms of biological role, component of the molecular motor that translocates viral genomic DNA in empty capsid during DNA packaging. Forms a tripartite terminase complex together with TRM2 and TRM3 in the host cytoplasm. Once the complex reaches the host nucleus, it interacts with the capsid portal vertex. This portal forms a ring in which genomic DNA is translocated into the capsid. TRM1 carries an endonuclease activity that plays an important role for the cleavage of concatemeric viral DNA into unit length genomes. This Murid herpesvirus 1 (strain Smith) (MuHV-1) protein is Tripartite terminase subunit 1.